A 527-amino-acid chain; its full sequence is Probable feruloyl esterase B (527 aa).

The N-terminal stretch at 1–19 (MALLRHLLPVLTVGSAVQS) is a signal peptide. Intrachain disulfides connect C31–C76 and C65–C115. N56, N86, and N139 each carry an N-linked (GlcNAc...) asparagine glycan. Intrachain disulfides connect C188–C442, C257–C274, C283–C292, and C504–C526. Residue S189 is the Acyl-ester intermediate of the active site. Positions 258, 261, 263, 265, and 267 each coordinate Ca(2+). Residue N277 is glycosylated (N-linked (GlcNAc...) asparagine). 2 N-linked (GlcNAc...) asparagine glycosylation sites follow: N312 and N356. Residues D401 and H441 each act as charge relay system in the active site.

Belongs to the tannase family.

It is found in the secreted. The enzyme catalyses feruloyl-polysaccharide + H2O = ferulate + polysaccharide.. In terms of biological role, involved in degradation of plant cell walls. Hydrolyzes the feruloyl-arabinose ester bond in arabinoxylans as well as the feruloyl-galactose and feruloyl-arabinose ester bonds in pectin. In Emericella nidulans (strain FGSC A4 / ATCC 38163 / CBS 112.46 / NRRL 194 / M139) (Aspergillus nidulans), this protein is Probable feruloyl esterase B (faeB).